We begin with the raw amino-acid sequence, 550 residues long: Hydroxylamine reductase (550 aa).

The [2Fe-2S] cluster site is built by cysteine 4, cysteine 7, cysteine 19, and cysteine 26. 8 residues coordinate hybrid [4Fe-2O-2S] cluster: histidine 249, glutamate 273, cysteine 317, cysteine 405, cysteine 433, cysteine 458, glutamate 492, and lysine 494. Cysteine 405 carries the cysteine persulfide modification.

Belongs to the HCP family. It depends on [2Fe-2S] cluster as a cofactor. Hybrid [4Fe-2O-2S] cluster serves as cofactor.

The protein resides in the cytoplasm. It catalyses the reaction A + NH4(+) + H2O = hydroxylamine + AH2 + H(+). Functionally, catalyzes the reduction of hydroxylamine to form NH(3) and H(2)O. In Aeromonas salmonicida (strain A449), this protein is Hydroxylamine reductase.